The primary structure comprises 175 residues: Gamma-crystallin B (175 aa).

2 consecutive Beta/gamma crystallin 'Greek key' domains span residues 2–40 (GKIT…RVDS) and 41–83 (GCWM…RLIP). The interval 84–88 (QHSGT) is connecting peptide. Beta/gamma crystallin 'Greek key' domains follow at residues 89 to 129 (FRMR…NVLD) and 130 to 172 (GCWV…RRVM).

Belongs to the beta/gamma-crystallin family. In terms of assembly, monomer.

In terms of biological role, crystallins are the dominant structural components of the vertebrate eye lens. In Canis lupus familiaris (Dog), this protein is Gamma-crystallin B (CRYGB).